The sequence spans 1356 residues: RHO1 GDP-GTP exchange protein 2 (1356 aa).

Ser-2 is modified (N-acetylserine). 2 disordered regions span residues 74–94 and 109–175; these read RRSGVEAAIDDSDIPNNEMKG and EVPD…PRNE. Ser-76 is subject to Phosphoserine. Composition is skewed to polar residues over residues 109–125 and 147–157; these read EVPDTQSLSSADNTPVS and HIYSTSNSASR. The residue at position 193 (Ser-193) is a Phosphoserine. Disordered stretches follow at residues 202–291, 303–362, 383–409, 531–571, and 626–645; these read LKKQ…RSMS, SFQS…SSSN, SVSGTSLSSPRRSSMTPLSASRPVMSA, GNHS…SQQK, and NISMALDDDDEEKPSWTSSV. A compositionally biased stretch (polar residues) spans 204–221; the sequence is KQSSFSTGSASTTPTQAR. Ser-223 bears the Phosphoserine mark. The span at 235-244 shows a compositional bias: basic and acidic residues; the sequence is SSKDLHEQHQ. Positions 250 to 265 are enriched in low complexity; sequence QHNNINNHNNNNTNNN. Polar residues predominate over residues 271–281; it reads VGSSNSNYPQH. Low complexity predominate over residues 282–291; the sequence is SHSISSRSMS. Polar residues predominate over residues 303–325; it reads SFQSKTSNSRKATQKYDITSNPF. Basic residues predominate over residues 329 to 338; sequence HHHHHHHHSS. Low complexity-rich tracts occupy residues 339 to 362 and 383 to 401; these read NSHSSLNNVHGSGNSSSVMGSSSN and SVSGTSLSSPRRSSMTPLS. Ser-566 and Ser-628 each carry phosphoserine. In terms of domain architecture, DH spans 659–846; it reads KRQEAIYEVY…RDFMKRIDQA (188 aa). The region spanning 1034-1336 is the CNH domain; it reads TNKINSVTSC…RLLQTSTQEI (303 aa).

Functionally, stimulates the exchange of RHO1 GDP-bound form into GTP-bound form. In Saccharomyces cerevisiae (strain ATCC 204508 / S288c) (Baker's yeast), this protein is RHO1 GDP-GTP exchange protein 2 (ROM2).